A 670-amino-acid polypeptide reads, in one-letter code: Sodium/glucose cotransporter 2 (670 aa).

Residues 1 to 20 (MEGHVEEGSELGEQKVLIDN) are Extracellular-facing. The helical transmembrane segment at 21–42 (PADILVIAAYFLLVIGVGLWSM) threads the bilayer. Residues 43–61 (FRTNRGTVGGYFLAGRSMV) are Cytoplasmic-facing. The helical transmembrane segment at 62–83 (WWPVGASLFASNIGSGHFVGLA) threads the bilayer. Residues alanine 71 and isoleucine 74 each coordinate Na(+). The Extracellular portion of the chain corresponds to 84–91 (GTGAASGL). Residues 92 to 112 (AVAGFEWNALFVVLLLGWLFV) form a helical membrane-spanning segment. Topologically, residues 113–134 (PVYLTAGVITMPQYLRKRFGGR) are cytoplasmic. A helical membrane pass occupies residues 135 to 164 (RIRLYLSVLSLFLYIFTKISVDMFSGAVFI). At 165 to 171 (QQALGWN) the chain is on the extracellular side. The next 2 membrane-spanning stretches (helical) occupy residues 172–193 (IYAS…GGLA) and 194–215 (ALMY…ILTG). Residues 216–273 (YAFHEVGGYSGLFDKYLGAVTSLTVSKDPAVGNISSTCYQPRPDSYHLLRDPVTGGLP) are Extracellular-facing. Residue asparagine 248 is glycosylated (N-linked (GlcNAc...) asparagine). Cystine bridges form between cysteine 253-cysteine 509, cysteine 343-cysteine 349, cysteine 353-cysteine 359, and cysteine 515-cysteine 520. A helical membrane pass occupies residues 274-293 (WPALLLGLTIVSGWHWCSDQ). Residues 294–307 (VIVQRCLAGKNLTH) lie on the Cytoplasmic side of the membrane. The chain crosses the membrane as a helical span at residues 308–329 (IKAGCILCGYLKLMPMFLMVMP). The Extracellular segment spans residues 330 to 373 (GMISRILYPDEVACVVPEVCKRVCGTEVGCSNIAYPRLVVKLMP). A helical membrane pass occupies residues 374–404 (NGLRGLMLAVMLAALMSSLASIFNSSSTLFT). Positions 387, 390, and 391 each coordinate Na(+). At 405–422 (MDIYTRLRPRAGDRELLL) the chain is on the cytoplasmic side. The chain crosses the membrane as a helical span at residues 423–444 (VGRLWVVFIVAVSVAWLPVVQA). Residues 445–449 (AQGGQ) are Extracellular-facing. A helical transmembrane segment spans residues 450-475 (LFDYIQSVSSYLAPPVSAVFVLALFV). The Cytoplasmic portion of the chain corresponds to 476–480 (PRVNE). Residues 481–503 (KGAFWGLIGGLLMGLARLIPEFF) traverse the membrane as a helical segment. At 504–521 (FGTGSCVRPSACPAIFCR) the chain is on the extracellular side. The chain crosses the membrane as a helical span at residues 522-545 (VHYLYFAIILFFCSGFLTLAISRC). The Cytoplasmic portion of the chain corresponds to 546-649 (TAPIPQKHLH…DISEDPSWAR (104 aa)). Residues 650 to 668 (VVNLNALLMMTVAVFLWGF) form a helical membrane-spanning segment. Topologically, residues 669 to 670 (YA) are extracellular.

This sequence belongs to the sodium:solute symporter (SSF) (TC 2.A.21) family. Forms a heterodimer (via TM13) with PDZK1IP1 (via N-terminal transmembrane helix); this interaction enhances SLC5A2 transporter activity. In terms of processing, glycosylated at a single site. Kidney, in proximal tubule S1 segments.

The protein resides in the apical cell membrane. It carries out the reaction D-glucose(out) + Na(+)(out) = D-glucose(in) + Na(+)(in). Enhanced by the interaction with PDZK1IP1/MAP17. Its function is as follows. Electrogenic Na(+)-coupled sugar symporter that actively transports D-glucose at the plasma membrane, with a Na(+) to sugar coupling ratio of 1:1. Transporter activity is driven by a transmembrane Na(+) electrochemical gradient set by the Na(+)/K(+) pump. Unlike SLC5A1/SGLT1, requires the auxiliary protein PDZK1IP1/MAP17 for full transporter activity. Has a primary role in D-glucose reabsorption from glomerular filtrate across the brush border of the early proximal tubules of the kidney. This chain is Sodium/glucose cotransporter 2 (Slc5a2), found in Rattus norvegicus (Rat).